Here is a 615-residue protein sequence, read N- to C-terminus: Dihydroxy-acid dehydratase (615 aa).

Aspartate 85 is a Mg(2+) binding site. Cysteine 126 is a binding site for [2Fe-2S] cluster. Residues aspartate 127 and lysine 128 each contribute to the Mg(2+) site. Lysine 128 is modified (N6-carboxylysine). Cysteine 199 contributes to the [2Fe-2S] cluster binding site. A Mg(2+)-binding site is contributed by glutamate 495. Catalysis depends on serine 521, which acts as the Proton acceptor.

Belongs to the IlvD/Edd family. Homodimer. The cofactor is [2Fe-2S] cluster. Mg(2+) is required as a cofactor.

It catalyses the reaction (2R)-2,3-dihydroxy-3-methylbutanoate = 3-methyl-2-oxobutanoate + H2O. The catalysed reaction is (2R,3R)-2,3-dihydroxy-3-methylpentanoate = (S)-3-methyl-2-oxopentanoate + H2O. It functions in the pathway amino-acid biosynthesis; L-isoleucine biosynthesis; L-isoleucine from 2-oxobutanoate: step 3/4. The protein operates within amino-acid biosynthesis; L-valine biosynthesis; L-valine from pyruvate: step 3/4. Functions in the biosynthesis of branched-chain amino acids. Catalyzes the dehydration of (2R,3R)-2,3-dihydroxy-3-methylpentanoate (2,3-dihydroxy-3-methylvalerate) into 2-oxo-3-methylpentanoate (2-oxo-3-methylvalerate) and of (2R)-2,3-dihydroxy-3-methylbutanoate (2,3-dihydroxyisovalerate) into 2-oxo-3-methylbutanoate (2-oxoisovalerate), the penultimate precursor to L-isoleucine and L-valine, respectively. The protein is Dihydroxy-acid dehydratase of Mannheimia succiniciproducens (strain KCTC 0769BP / MBEL55E).